A 259-amino-acid polypeptide reads, in one-letter code: Cytosolic Fe-S cluster assembly factor Nubp2 homolog (259 aa).

14-21 (GKGGVGKS) serves as a coordination point for ATP. [4Fe-4S] cluster contacts are provided by cysteine 188 and cysteine 191.

This sequence belongs to the Mrp/NBP35 ATP-binding proteins family. NUBP2/CFD1 subfamily. As to quaternary structure, heterotetramer of 2 Nubp1 and 2 Nubp2 chains. The cofactor is [4Fe-4S] cluster.

It localises to the cytoplasm. Functionally, component of the cytosolic iron-sulfur (Fe/S) protein assembly (CIA) machinery. Required for maturation of extramitochondrial Fe-S proteins. The Nubp1-Nubp2 heterotetramer forms a Fe-S scaffold complex, mediating the de novo assembly of an Fe-S cluster and its transfer to target apoproteins. This chain is Cytosolic Fe-S cluster assembly factor Nubp2 homolog, found in Aedes aegypti (Yellowfever mosquito).